The primary structure comprises 365 residues: Virion host shutoff protein (365 aa).

It belongs to the herpesviridae VHS protein family.

It localises to the virion. Minor structural protein that acts as an endoribonuclease during lytic infection. Degrades host mRNAs in the cytoplasm by cutting them at preferred sites, including some in regions of translation initiation. This is Virion host shutoff protein (VHS) from Sus scrofa (Pig).